The sequence spans 151 residues: uncharacterized protein (151 aa).

Residues M6–L143 enclose the Nudix hydrolase domain.

This is an uncharacterized protein from Escherichia coli (Bacteriophage T4).